The chain runs to 157 residues: Phosphopantetheine adenylyltransferase (157 aa).

Ser-9 is a binding site for substrate. ATP is bound by residues 9-10 (SF) and His-17. Substrate contacts are provided by Lys-41, Leu-73, and Lys-87. ATP is bound by residues 88–90 (GLR), Glu-98, and 123–129 (YSFLSSS).

Belongs to the bacterial CoaD family. In terms of assembly, homohexamer. The cofactor is Mg(2+).

Its subcellular location is the cytoplasm. The enzyme catalyses (R)-4'-phosphopantetheine + ATP + H(+) = 3'-dephospho-CoA + diphosphate. Its pathway is cofactor biosynthesis; coenzyme A biosynthesis; CoA from (R)-pantothenate: step 4/5. In terms of biological role, reversibly transfers an adenylyl group from ATP to 4'-phosphopantetheine, yielding dephospho-CoA (dPCoA) and pyrophosphate. This is Phosphopantetheine adenylyltransferase from Alkaliphilus oremlandii (strain OhILAs) (Clostridium oremlandii (strain OhILAs)).